An 844-amino-acid polypeptide reads, in one-letter code: Receptor-like protein 49 (844 aa).

Residues 1–31 (MMYSCRERRMITVKWSLCLIFCLSNSILVFA) form the signal peptide. Topologically, residues 32–803 (KHLCLPDQRD…QDEEKEEEEQ (772 aa)) are extracellular. Residues Asn59, Asn95, Asn112, and Asn159 are each glycosylated (N-linked (GlcNAc...) asparagine). 25 LRR repeats span residues 102-126 (QHLQKLYLGCNTSFGSLSYNDGLKG), 136-160 (LKYLKVLSLRGCNLFGKIPSSLGNL), 161-183 (SYLTHLDLSFNDFTGVIPDSMGN), 185-208 (NYLRVLNLGKCNFYGKVPSSLGNL), 209-231 (SYLAQLDLSYNDFTREGPDSMGN), 242-265 (LNSLTDIDLGSNQLKGMLPSNMSS), 266-290 (LSKLEYFYIGGNSFSGSIPSSLFMI), 292-313 (SLVELDLQRNHFSALEIGNISS), 315-339 (SKLQVLILGGNNFNPDIVDLSIFSP), 345-362 (YLDVSGINLKISSTVSLP), 363-385 (SPIEYLVLSSCNISEFPKFLRNQ), 386-409 (TKLYSLDISANQIEGQVPEWLWSL), 410-434 (PELQSINISHNSFNGFEGPADVIQG), 436-457 (GELYMLDISSNIFQDPFPLLPV), 458-481 (DSMNFLFSSNNRFSGEIPKTICEL), 482-504 (DNLVMLVLSNNNFSGSIPRCFEN), 506-527 (HLYVLHLRNNNLSGIFPEEAIS), 528-551 (DRLQSLDVGHNLFSGELPKSLINC), 553-574 (ALEFLYVEDNRISDTFPSWLEL), 575-601 (LPNFQILVLRSNEFYGPIFSPGDSLSF), 602-625 (PRLRIFDISENRFTGVLPSDYFAP), 665-689 (FTIYKTIDVSGNRLEGDIPESISLL), 690-713 (KELIVLNMSNNAFTGHIPPSLSNL), 714-737 (SNLQSLDLSQNRLSGSIPGELGEL), and 739-762 (FLARMNFSYNRLEGPIPQTTQIQT). N-linked (GlcNAc...) asparagine glycosylation occurs at Asn207. A glycan (N-linked (GlcNAc...) asparagine) is linked at Asn262. The N-linked (GlcNAc...) asparagine glycan is linked to Asn310. N-linked (GlcNAc...) asparagine glycosylation is found at Asn374 and Asn384. Residue Asn416 is glycosylated (N-linked (GlcNAc...) asparagine). N-linked (GlcNAc...) asparagine glycosylation is found at Asn493, Asn516, and Asn550. N-linked (GlcNAc...) asparagine glycosylation is found at Asn696 and Asn712. N-linked (GlcNAc...) asparagine glycosylation occurs at Asn744. The chain crosses the membrane as a helical span at residues 804–824 (VFSWIAAAIGYVPGVVCGLTI). Over 825–844 (GHILVSHKRDWFMRIVSLFT) the chain is Cytoplasmic.

The protein belongs to the RLP family.

Its subcellular location is the cell membrane. In Arabidopsis thaliana (Mouse-ear cress), this protein is Receptor-like protein 49.